Here is a 947-residue protein sequence, read N- to C-terminus: Bifunctional glutamine synthetase adenylyltransferase/adenylyl-removing enzyme (947 aa).

Positions 1 to 440 (MTPLSSPLSQ…VFNELIGDDE (440 aa)) are adenylyl removase. Residues 450 to 947 (SEPWREVWQD…ASWRKWLVAV (498 aa)) form an adenylyl transferase region.

Belongs to the GlnE family. Mg(2+) serves as cofactor.

The catalysed reaction is [glutamine synthetase]-O(4)-(5'-adenylyl)-L-tyrosine + phosphate = [glutamine synthetase]-L-tyrosine + ADP. It catalyses the reaction [glutamine synthetase]-L-tyrosine + ATP = [glutamine synthetase]-O(4)-(5'-adenylyl)-L-tyrosine + diphosphate. Functionally, involved in the regulation of glutamine synthetase GlnA, a key enzyme in the process to assimilate ammonia. When cellular nitrogen levels are high, the C-terminal adenylyl transferase (AT) inactivates GlnA by covalent transfer of an adenylyl group from ATP to specific tyrosine residue of GlnA, thus reducing its activity. Conversely, when nitrogen levels are low, the N-terminal adenylyl removase (AR) activates GlnA by removing the adenylyl group by phosphorolysis, increasing its activity. The regulatory region of GlnE binds the signal transduction protein PII (GlnB) which indicates the nitrogen status of the cell. This Salmonella paratyphi A (strain ATCC 9150 / SARB42) protein is Bifunctional glutamine synthetase adenylyltransferase/adenylyl-removing enzyme.